A 382-amino-acid chain; its full sequence is Galactokinase (382 aa).

34 to 37 (EHTD) serves as a coordination point for substrate. Residue 124 to 130 (GAGLSSS) coordinates ATP. Mg(2+) contacts are provided by S130 and E162. Catalysis depends on D174, which acts as the Proton acceptor. Y223 contacts substrate.

This sequence belongs to the GHMP kinase family. GalK subfamily.

The protein resides in the cytoplasm. The enzyme catalyses alpha-D-galactose + ATP = alpha-D-galactose 1-phosphate + ADP + H(+). Its pathway is carbohydrate metabolism; galactose metabolism. Functionally, catalyzes the transfer of the gamma-phosphate of ATP to D-galactose to form alpha-D-galactose-1-phosphate (Gal-1-P). The chain is Galactokinase from Enterobacter sp. (strain 638).